The primary structure comprises 445 residues: MTFQNKKILVAGLGGTGISMIAYLRKNGVEVAAYDAELKPERVAQIGKMFDGLVFYTGRLKDALDNGFDILALSPGISERQPDIEAFKQNGGRVLGDIELLADIVNRRGDKVIAITGSNGKTTVTSLVGYLCIKCGLDTVIAGNIGTPVLEAEWQREGKKADVWVLELSSFQLENTESLRPTAATVLNISEDHLDRYDDLLDYAHTKDKIFRGDGVQVLNADDAFCRAMKRAGREVKWFSLEYEADFWLERETGRLKQGNEDLIATQDIPLQGLHNATNVMAAVALCEAVGLPREALLEHVKTFQGLPHRVEKIGEKNGVVFIDDSKGTNVGATAAAIAGLQNPLFVILGGMGKGQDFTPLRDALAGKAKGVFLIGVDALQIRRDLDGCDLNMTDCATLEEAVQKAYAQAEAGDIVLLSPACASFDMFKGYAHRSEVFIGAFKAL.

117 to 123 is an ATP binding site; it reads GSNGKTT.

It belongs to the MurCDEF family.

It is found in the cytoplasm. The catalysed reaction is UDP-N-acetyl-alpha-D-muramoyl-L-alanine + D-glutamate + ATP = UDP-N-acetyl-alpha-D-muramoyl-L-alanyl-D-glutamate + ADP + phosphate + H(+). It functions in the pathway cell wall biogenesis; peptidoglycan biosynthesis. Cell wall formation. Catalyzes the addition of glutamate to the nucleotide precursor UDP-N-acetylmuramoyl-L-alanine (UMA). The chain is UDP-N-acetylmuramoylalanine--D-glutamate ligase from Neisseria meningitidis serogroup C (strain 053442).